The primary structure comprises 341 residues: D-erythrose-4-phosphate dehydrogenase (341 aa).

14–15 is an NAD(+) binding site; it reads RI. Substrate is bound by residues 156–158, R202, 215–216, and R238; these read SCT and TR. Catalysis depends on C157, which acts as the Nucleophile. Position 320 (N320) interacts with NAD(+).

This sequence belongs to the glyceraldehyde-3-phosphate dehydrogenase family. Epd subfamily. As to quaternary structure, homotetramer.

Its subcellular location is the cytoplasm. The catalysed reaction is D-erythrose 4-phosphate + NAD(+) + H2O = 4-phospho-D-erythronate + NADH + 2 H(+). Its pathway is cofactor biosynthesis; pyridoxine 5'-phosphate biosynthesis; pyridoxine 5'-phosphate from D-erythrose 4-phosphate: step 1/5. Its function is as follows. Catalyzes the NAD-dependent conversion of D-erythrose 4-phosphate to 4-phosphoerythronate. In Idiomarina loihiensis (strain ATCC BAA-735 / DSM 15497 / L2-TR), this protein is D-erythrose-4-phosphate dehydrogenase.